The primary structure comprises 1464 residues: Gag-Pol polyprotein (1464 aa).

A lipid anchor (N-myristoyl glycine; by host) is attached at G2. The tract at residues 7–31 (VLSGKKTDELEKVRLRPGGKKRYML) is interaction with Gp41. The Nuclear export signal motif lies at 16–22 (LEKVRLR). The Nuclear localization signal motif lies at 26-32 (KKRYMLK). The residue at position 130 (Y130) is a Phosphotyrosine; by host. Residues 186–223 (NCVGEHQAAMQIIREIINEEAADWDQQHPSPGPMPAGQ) form an interaction with human PPIA/CYPA and NUP153 region. Positions 274 to 360 (YNPTNILDIK…GGPGQKARLM (87 aa)) are dimerization/Multimerization of capsid protein p24. 2 consecutive CCHC-type zinc fingers follow at residues 387–404 (VTCW…QCKA) and 408–425 (QGCW…KCPE). The segment covering 483 to 499 (AKELHATREEAEGEQRE) has biased composition (basic and acidic residues). The segment at 483 to 504 (AKELHATREEAEGEQRETLQGG) is disordered. A dimerization of protease region spans residues 511-515 (PQFSL). Residues 531–600 (EVLLDTGADD…PINIFGRNIL (70 aa)) form the Peptidase A2 domain. The For protease activity; shared with dimeric partner role is filled by D535. 2 dimerization of protease regions span residues 559–565 (GIGGFIN) and 598–610 (NILN…LNFP). A Reverse transcriptase domain is found at 654–844 (GQLEEAPPTN…PFKWMGYELW (191 aa)). Mg(2+) is bound by residues D719, D794, and D795. The interval 836–844 (FKWMGYELW) is RT 'primer grip'. The Tryptophan repeat motif motif lies at 1006–1022 (WDQWWTDYWQVTWIPEW). An RNase H type-1 domain is found at 1042-1165 (LEGVETYYTD…VDHLVSQGIR (124 aa)). D1051, E1086, D1106, and D1157 together coordinate Mg(2+). Residues 1171–1212 (EKIEPAQEEHEKYHNNVKELVHKFGIPQLVARQIVNSCDKCQ) form an Integrase-type zinc finger. Zn(2+)-binding residues include H1180, H1184, C1208, and C1211. One can recognise an Integrase catalytic domain in the interval 1222–1373 (VNSELGTWQM…PAERIVNMIT (152 aa)). D1232, D1284, and E1320 together coordinate Mg(2+). Positions 1391–1438 (FRVYYREGRDQLWKGPGDLLWKGEGAVIIKVGTEIKVIPRRKAKIIRN) form a DNA-binding region, integrase-type.

As to quaternary structure, homotrimer; further assembles as hexamers of trimers. Interacts with gp41 (via C-terminus). Interacts with host CALM1; this interaction induces a conformational change in the Matrix protein, triggering exposure of the myristate group. Interacts with host AP3D1; this interaction allows the polyprotein trafficking to multivesicular bodies during virus assembly. Part of the pre-integration complex (PIC) which is composed of viral genome, matrix protein, Vpr and integrase. In terms of assembly, homodimer; the homodimer further multimerizes as homohexamers or homopentamers. Interacts with human PPIA/CYPA. Interacts with human NUP153. Interacts with host PDZD8; this interaction stabilizes the capsid. Interacts with monkey TRIM5; this interaction destabilizes the capsid. Homodimer, whose active site consists of two apposed aspartic acid residues. As to quaternary structure, heterodimer of p66 RT and p51 RT (RT p66/p51). Heterodimerization of RT is essential for DNA polymerase activity. The overall folding of the subdomains is similar in p66 RT and p51 RT but the spatial arrangements of the subdomains are dramatically different. In terms of assembly, homotetramer; may further associate as a homohexadecamer. Part of the pre-integration complex (PIC) which is composed of viral genome, matrix protein, Vpr and integrase. Interacts with human SMARCB1/INI1 and human PSIP1/LEDGF isoform 1. Interacts with human KPNA3; this interaction might play a role in nuclear import of the pre-integration complex. Interacts with human NUP153; this interaction might play a role in nuclear import of the pre-integration complex. It depends on Mg(2+) as a cofactor. In terms of processing, specific enzymatic cleavages by the viral protease yield mature proteins. The protease is released by autocatalytic cleavage. The polyprotein is cleaved during and after budding, this process is termed maturation. Proteolytic cleavage of p66 RT removes the RNase H domain to yield the p51 RT subunit. Nucleocapsid protein p7 might be further cleaved after virus entry.

It is found in the host cell membrane. It localises to the host endosome. The protein resides in the host multivesicular body. Its subcellular location is the virion membrane. The protein localises to the host nucleus. It is found in the host cytoplasm. It localises to the virion. It carries out the reaction Endopeptidase for which the P1 residue is preferably hydrophobic.. The enzyme catalyses Endohydrolysis of RNA in RNA/DNA hybrids. Three different cleavage modes: 1. sequence-specific internal cleavage of RNA. Human immunodeficiency virus type 1 and Moloney murine leukemia virus enzymes prefer to cleave the RNA strand one nucleotide away from the RNA-DNA junction. 2. RNA 5'-end directed cleavage 13-19 nucleotides from the RNA end. 3. DNA 3'-end directed cleavage 15-20 nucleotides away from the primer terminus.. It catalyses the reaction 3'-end directed exonucleolytic cleavage of viral RNA-DNA hybrid.. The catalysed reaction is DNA(n) + a 2'-deoxyribonucleoside 5'-triphosphate = DNA(n+1) + diphosphate. Its activity is regulated as follows. Protease: The viral protease is inhibited by many synthetic protease inhibitors (PIs), such as amprenavir, atazanavir, indinavir, loprinavir, nelfinavir, ritonavir and saquinavir. Use of protease inhibitors in tritherapy regimens permit more ambitious therapeutic strategies. Reverse transcriptase/ribonuclease H: RT can be inhibited either by nucleoside RT inhibitors (NRTIs) or by non nucleoside RT inhibitors (NNRTIs). NRTIs act as chain terminators, whereas NNRTIs inhibit DNA polymerization by binding a small hydrophobic pocket near the RT active site and inducing an allosteric change in this region. Classical NRTIs are abacavir, adefovir (PMEA), didanosine (ddI), lamivudine (3TC), stavudine (d4T), tenofovir (PMPA), zalcitabine (ddC), and zidovudine (AZT). Classical NNRTIs are atevirdine (BHAP U-87201E), delavirdine, efavirenz (DMP-266), emivirine (I-EBU), and nevirapine (BI-RG-587). The tritherapies used as a basic effective treatment of AIDS associate two NRTIs and one NNRTI. Functionally, mediates, with Gag polyprotein, the essential events in virion assembly, including binding the plasma membrane, making the protein-protein interactions necessary to create spherical particles, recruiting the viral Env proteins, and packaging the genomic RNA via direct interactions with the RNA packaging sequence (Psi). Gag-Pol polyprotein may regulate its own translation, by the binding genomic RNA in the 5'-UTR. At low concentration, the polyprotein would promote translation, whereas at high concentration, the polyprotein would encapsidate genomic RNA and then shut off translation. In terms of biological role, targets the polyprotein to the plasma membrane via a multipartite membrane-binding signal, that includes its myristoylated N-terminus. Matrix protein is part of the pre-integration complex. Implicated in the release from host cell mediated by Vpu. Binds to RNA. Forms the conical core that encapsulates the genomic RNA-nucleocapsid complex in the virion. Most core are conical, with only 7% tubular. The core is constituted by capsid protein hexamer subunits. The core is disassembled soon after virion entry. Host restriction factors such as TRIM5-alpha or TRIMCyp bind retroviral capsids and cause premature capsid disassembly, leading to blocks in reverse transcription. Capsid restriction by TRIM5 is one of the factors which restricts HIV-1 to the human species. Host PIN1 apparently facilitates the virion uncoating. On the other hand, interactions with PDZD8 or CYPA stabilize the capsid. Its function is as follows. Encapsulates and protects viral dimeric unspliced genomic RNA (gRNA). Binds these RNAs through its zinc fingers. Acts as a nucleic acid chaperone which is involved in rearangement of nucleic acid secondary structure during gRNA retrotranscription. Also facilitates template switch leading to recombination. As part of the polyprotein, participates in gRNA dimerization, packaging, tRNA incorporation and virion assembly. Functionally, aspartyl protease that mediates proteolytic cleavages of Gag and Gag-Pol polyproteins during or shortly after the release of the virion from the plasma membrane. Cleavages take place as an ordered, step-wise cascade to yield mature proteins. This process is called maturation. Displays maximal activity during the budding process just prior to particle release from the cell. Also cleaves Nef and Vif, probably concomitantly with viral structural proteins on maturation of virus particles. Hydrolyzes host EIF4GI and PABP1 in order to shut off the capped cellular mRNA translation. The resulting inhibition of cellular protein synthesis serves to ensure maximal viral gene expression and to evade host immune response. In terms of biological role, multifunctional enzyme that converts the viral RNA genome into dsDNA in the cytoplasm, shortly after virus entry into the cell. This enzyme displays a DNA polymerase activity that can copy either DNA or RNA templates, and a ribonuclease H (RNase H) activity that cleaves the RNA strand of RNA-DNA heteroduplexes in a partially processive 3' to 5' endonucleasic mode. Conversion of viral genomic RNA into dsDNA requires many steps. A tRNA(3)-Lys binds to the primer-binding site (PBS) situated at the 5'-end of the viral RNA. RT uses the 3' end of the tRNA primer to perform a short round of RNA-dependent minus-strand DNA synthesis. The reading proceeds through the U5 region and ends after the repeated (R) region which is present at both ends of viral RNA. The portion of the RNA-DNA heteroduplex is digested by the RNase H, resulting in a ssDNA product attached to the tRNA primer. This ssDNA/tRNA hybridizes with the identical R region situated at the 3' end of viral RNA. This template exchange, known as minus-strand DNA strong stop transfer, can be either intra- or intermolecular. RT uses the 3' end of this newly synthesized short ssDNA to perform the RNA-dependent minus-strand DNA synthesis of the whole template. RNase H digests the RNA template except for two polypurine tracts (PPTs) situated at the 5'-end and near the center of the genome. It is not clear if both polymerase and RNase H activities are simultaneous. RNase H probably can proceed both in a polymerase-dependent (RNA cut into small fragments by the same RT performing DNA synthesis) and a polymerase-independent mode (cleavage of remaining RNA fragments by free RTs). Secondly, RT performs DNA-directed plus-strand DNA synthesis using the PPTs that have not been removed by RNase H as primers. PPTs and tRNA primers are then removed by RNase H. The 3' and 5' ssDNA PBS regions hybridize to form a circular dsDNA intermediate. Strand displacement synthesis by RT to the PBS and PPT ends produces a blunt ended, linear dsDNA copy of the viral genome that includes long terminal repeats (LTRs) at both ends. Catalyzes viral DNA integration into the host chromosome, by performing a series of DNA cutting and joining reactions. This enzyme activity takes place after virion entry into a cell and reverse transcription of the RNA genome in dsDNA. The first step in the integration process is 3' processing. This step requires a complex comprising the viral genome, matrix protein, Vpr and integrase. This complex is called the pre-integration complex (PIC). The integrase protein removes 2 nucleotides from each 3' end of the viral DNA, leaving recessed CA OH's at the 3' ends. In the second step, the PIC enters cell nucleus. This process is mediated through integrase and Vpr proteins, and allows the virus to infect a non dividing cell. This ability to enter the nucleus is specific of lentiviruses, other retroviruses cannot and rely on cell division to access cell chromosomes. In the third step, termed strand transfer, the integrase protein joins the previously processed 3' ends to the 5' ends of strands of target cellular DNA at the site of integration. The 5'-ends are produced by integrase-catalyzed staggered cuts, 5 bp apart. A Y-shaped, gapped, recombination intermediate results, with the 5'-ends of the viral DNA strands and the 3' ends of target DNA strands remaining unjoined, flanking a gap of 5 bp. The last step is viral DNA integration into host chromosome. This involves host DNA repair synthesis in which the 5 bp gaps between the unjoined strands are filled in and then ligated. Since this process occurs at both cuts flanking the HIV genome, a 5 bp duplication of host DNA is produced at the ends of HIV-1 integration. Alternatively, Integrase may catalyze the excision of viral DNA just after strand transfer, this is termed disintegration. The sequence is that of Gag-Pol polyprotein (gag-pol) from Human immunodeficiency virus type 2 subtype B (isolate EHO) (HIV-2).